Here is a 945-residue protein sequence, read N- to C-terminus: Glutamyl aminopeptidase (945 aa).

Residues 1 to 18 are Cytoplasmic-facing; sequence MNFAEEEPSKKYCIKGKH. The chain crosses the membrane as a helical; Signal-anchor for type II membrane protein span at residues 19 to 39; it reads VAIICATVVAVGLIVGLSVGL. Over 40 to 945 the chain is Extracellular; it reads TRSCEPGTTP…SISEWFTSMP (906 aa). The tract at residues 45 to 77 is disordered; sequence PGTTPAPSNPPPHTSTALPPQDQNVCPDSDDES. 2 N-linked (GlcNAc...) asparagine glycosylation sites follow: Asn116 and Asn189. Glu215 is a binding site for substrate. N-linked (GlcNAc...) asparagine glycans are attached at residues Asn236 and Asn316. 349-353 lines the substrate pocket; that stretch reads GAMEN. His385 contributes to the Zn(2+) binding site. Glu386 acts as the Proton acceptor in catalysis. His389 and Glu408 together coordinate Zn(2+). Residues Asn546, Asn584, Asn601, Asn640, Asn669, Asn754, Asn766, and Asn792 are each glycosylated (N-linked (GlcNAc...) asparagine). A substrate-binding site is contributed by Arg878.

Belongs to the peptidase M1 family. Homodimer; disulfide-linked. Zn(2+) is required as a cofactor. Highest expression in kidney proximal tubules and ileum enterocytes. High expression also detected in liver and pituitary. Lower levels in heart, adrenal gland and brain. Not detected in aorta, lung or spleen. In heart, higher levels in ventricle than in atrium. Also expressed in glomerular mesangial cells.

It localises to the cell membrane. The catalysed reaction is Release of N-terminal glutamate (and to a lesser extent aspartate) from a peptide.. With respect to regulation, substrate specificity is modulated by calcium which enhances the enzymatic activity for cleavage of acidic residues while reducing its activity with basic residues. Inhibited by aminopeptidase inhibitors amastatin and bestatin. Its function is as follows. Regulates central hypertension through its calcium-modulated preference to cleave N-terminal acidic residues from peptides such as angiotensin II. This is Glutamyl aminopeptidase (Enpep) from Rattus norvegicus (Rat).